The sequence spans 493 residues: Probable protein phosphatase 2C 40 (493 aa).

The 336-residue stretch at 145–480 (LLSAMEVQVA…DDVTIMVITL (336 aa)) folds into the PPM-type phosphatase domain. Residues Asp-180, Gly-181, Asp-408, and Asp-471 each contribute to the Mn(2+) site.

This sequence belongs to the PP2C family. It depends on Mg(2+) as a cofactor. The cofactor is Mn(2+).

It catalyses the reaction O-phospho-L-seryl-[protein] + H2O = L-seryl-[protein] + phosphate. The enzyme catalyses O-phospho-L-threonyl-[protein] + H2O = L-threonyl-[protein] + phosphate. The polypeptide is Probable protein phosphatase 2C 40 (Arabidopsis thaliana (Mouse-ear cress)).